Reading from the N-terminus, the 257-residue chain is Steroid 5-alpha-reductase DET2 (257 aa).

The next 6 helical transmembrane spans lie at Phe-11–Thr-31, Ile-47–Val-67, Leu-78–Tyr-97, Phe-110–Ser-130, Ile-151–Leu-171, and Ile-200–Val-220.

The protein belongs to the steroid 5-alpha reductase family. Mostly expressed in leaves and hypocotyls and, to a lower extent, in stems, cotyledons, roots, seeds and callus.

The protein resides in the membrane. It carries out the reaction a 3-oxo-5alpha-steroid + NADP(+) = a 3-oxo-Delta(4)-steroid + NADPH + H(+). Its pathway is plant hormone biosynthesis; brassinosteroid biosynthesis. Repressed by steroid (4-MA, VG106, PD91, PD17, Finasteride) and non-steroid (AS601811, AFA27, AFA76, AFA131, AFA192) inhibitors; steroid inhibitors are generally more efficient. Its function is as follows. Involved in a reduction step in the biosynthesis of the plant steroid, brassinolide (BL). Can use progesterone, testosterone, androstenedione and campestenone as substrate. The sequence is that of Steroid 5-alpha-reductase DET2 from Solanum lycopersicum (Tomato).